A 615-amino-acid polypeptide reads, in one-letter code: Delta(14)-sterol reductase LBR (615 aa).

The region spanning 1-62 (MPSRKFADGE…DIKPLTSFRQ (62 aa)) is the Tudor domain. Residues 1–211 (MPSRKFADGE…IRAKDLEFGG (211 aa)) lie on the Nuclear side of the membrane. The disordered stretch occupies residues 53–109 (DIKPLTSFRQRKGGSTSSSPSRRRGSRSRSRSRSPGRPPKSARRSASASHQADIKEA). K55 bears the N6-acetyllysine mark. Position 58 is a phosphothreonine (T58). 2 positions are modified to phosphoserine: S59 and S67. S71 and S86 each carry phosphoserine; by CDK1. The segment covering 73–86 (SRRRGSRSRSRSRS) has biased composition (basic residues). Residues S97 and S99 each carry the phosphoserine modification. Residue T118 is modified to Phosphothreonine. S128 bears the Phosphoserine mark. A Phosphothreonine modification is found at T200. The next 8 membrane-spanning stretches (helical) occupy residues 212 to 232 (VPGVFLIMFGLPVFLFLLLLM), 258 to 278 (VFGVYLLWFLIQVVFYLLPIG), 299 to 319 (FYAFILTSAVIGTSLFQGVEF), 326 to 346 (FLQFALAATVFCVVLSVYLYM), 415 to 435 (VPSLAMILVNSFQLLYVVDAL), 447 to 467 (IIHDGFGFMLAFGDLVWVPFI), 481 to 501 (EVSWPMASLIIVLKFCGYVIF), and 561 to 581 (ACGFNHILPYFYIIYFTMLLV). An N6-acetyllysine mark is found at K594 and K601.

The protein belongs to the ERG4/ERG24 family. In terms of assembly, interacts with CBX5. Interacts with DNA. Interaction with DNA is sequence independent with higher affinity for supercoiled and relaxed circular DNA than linear DNA. Interacts with lamin B. Interacts with CLNK. Interacts with TMEM147; promoting LBR localization to the nucleus inner membrane. Post-translationally, phosphorylated by CDK1 in mitosis when the inner nuclear membrane breaks down into vesicles that dissociate from the lamina and the chromatin. It is phosphorylated by different protein kinases in interphase when the membrane is associated with these structures. Phosphorylation of LBR and HP1 proteins may be responsible for some of the alterations in chromatin organization and nuclear structure which occur at various times during the cell cycle. Phosphorylated by SRPK1. In late anaphase LBR is dephosphorylated, probably by PP1 and/or PP2A, allowing reassociation with chromatin.

The protein resides in the nucleus inner membrane. The protein localises to the nucleus. It localises to the cytoplasm. Its subcellular location is the endoplasmic reticulum membrane. It catalyses the reaction 5alpha-cholest-8,14-dien-3beta-ol + NADPH + H(+) = 5alpha-cholest-8-en-3beta-ol + NADP(+). The catalysed reaction is 4,4-dimethyl-5alpha-cholesta-8,24-dien-3beta-ol + NADP(+) = 4,4-dimethyl-5alpha-cholesta-8,14,24-trien-3beta-ol + NADPH + H(+). The enzyme catalyses 4,4-dimethyl-8,14-cholestadien-3beta-ol + NADPH + H(+) = 4,4-dimethyl-5alpha-cholest-8-en-3beta-ol + NADP(+). It functions in the pathway steroid biosynthesis; cholesterol biosynthesis. Functionally, catalyzes the reduction of the C14-unsaturated bond of lanosterol, as part of the metabolic pathway leading to cholesterol biosynthesis. Plays a critical role in myeloid cell cholesterol biosynthesis which is essential to both myeloid cell growth and functional maturation. Mediates the activation of NADPH oxidases, perhaps by maintaining critical levels of cholesterol required for membrane lipid raft formation during neutrophil differentiation. Anchors the lamina and the heterochromatin to the inner nuclear membrane. In Pongo abelii (Sumatran orangutan), this protein is Delta(14)-sterol reductase LBR (LBR).